The primary structure comprises 288 residues: Ribosomal RNA small subunit methyltransferase A (288 aa).

Residues Asn28, Leu30, Gly55, Glu77, Asp103, and Asn123 each contribute to the S-adenosyl-L-methionine site.

The protein belongs to the class I-like SAM-binding methyltransferase superfamily. rRNA adenine N(6)-methyltransferase family. RsmA subfamily.

It is found in the cytoplasm. It carries out the reaction adenosine(1518)/adenosine(1519) in 16S rRNA + 4 S-adenosyl-L-methionine = N(6)-dimethyladenosine(1518)/N(6)-dimethyladenosine(1519) in 16S rRNA + 4 S-adenosyl-L-homocysteine + 4 H(+). Functionally, specifically dimethylates two adjacent adenosines (A1518 and A1519) in the loop of a conserved hairpin near the 3'-end of 16S rRNA in the 30S particle. May play a critical role in biogenesis of 30S subunits. This Xanthobacter autotrophicus (strain ATCC BAA-1158 / Py2) protein is Ribosomal RNA small subunit methyltransferase A.